A 516-amino-acid chain; its full sequence is ADP-ribosylation factor GTPase-activating protein 3 (516 aa).

The 117-residue stretch at 10 to 126 (LTIFKRLRSV…IKSLASQATR (117 aa)) folds into the Arf-GAP domain. The segment at 25–48 (CFDCGAKNPSWASITYGVFLCIDC) adopts a C4-type zinc-finger fold. Residues 170–199 (AEPSSLTSRPAETTLENNEGGQEQGPCVEG) are disordered. Residues 173–190 (SSLTSRPAETTLENNEGG) show a composition bias toward polar residues. A Phosphoserine modification is found at Ser231. Residues 243-264 (NEIEKQAQAADKMKEQEDLAKA) adopt a coiled-coil conformation. A phosphoserine mark is found at Ser270, Ser274, Ser331, and Ser370. The interval 393–417 (TTGYSDRPTARHKPDYEPVENTDEA) is disordered. Ser428, Ser451, Ser453, Ser455, Ser457, and Ser458 each carry phosphoserine.

It localises to the cytoplasm. The protein resides in the golgi apparatus membrane. With respect to regulation, GAP activity stimulated by phosphatidylinositol 4,5-bisphosphate (PIP2). Its function is as follows. GTPase-activating protein (GAP) for ADP ribosylation factor 1 (ARF1). Hydrolysis of ARF1-bound GTP may lead to dissociation of coatomer from Golgi-derived membranes to allow fusion with target membranes. This is ADP-ribosylation factor GTPase-activating protein 3 from Pongo abelii (Sumatran orangutan).